Reading from the N-terminus, the 773-residue chain is Tyrosine kinase receptor Cad96Ca (773 aa).

Residues 1–48 (MVYHHHNHESRIIHCRKQLTSWRRRSLLLTIIVVTATVVSLISQEAEA) form the signal peptide. Over 49-315 (HNQNAPPILY…ITIFSLKSGT (267 aa)) the chain is Extracellular. The Cadherin domain maps to 58-172 (YVRERNWRIS…ENSSGYRPQT (115 aa)). N-linked (GlcNAc...) asparagine glycans are attached at residues asparagine 126, asparagine 164, and asparagine 180. The interval 196 to 302 (SIRNGLPNSR…TPSGGHHNNS (107 aa)) is disordered. A compositionally biased stretch (pro residues) spans 209-235 (WYPPVPQNNIFGPPPFGNNYPPPPPNI). The segment covering 243 to 253 (SGEEEQPDEEV) has biased composition (acidic residues). Polar residues-rich tracts occupy residues 254–283 (TPTTPVRISSTTPKSRTKLTPITANNSTRV) and 290–302 (ETTTPSGGHHNNS). N-linked (GlcNAc...) asparagine glycosylation is found at asparagine 278, asparagine 279, asparagine 300, and asparagine 301. The chain crosses the membrane as a helical span at residues 316-336 (IPIVVTVGGFFVAIAVLLAYL). The Cytoplasmic segment spans residues 337 to 773 (CRRRLCAISR…NIVSLSGEKL (437 aa)). Disordered regions lie at residues 352–373 (KEKEELAKKSNQSQLSSTLTDD) and 411–447 (TGVTNGGVSSPGVPSPGTGEPGSNLGPGCLTGGAGSS). Positions 361-373 (SNQSQLSSTLTDD) are enriched in polar residues. Residues 411 to 433 (TGVTNGGVSSPGVPSPGTGEPGS) are compositionally biased toward low complexity. Positions 470-749 (LKFFNILGEG…MLDKLLHTEM (280 aa)) constitute a Protein kinase domain. ATP-binding positions include 476-484 (LGEGAFGQV) and lysine 504. The Proton acceptor role is filled by aspartate 610.

This sequence belongs to the protein kinase superfamily. Tyr protein kinase family. Fibroblast growth factor receptor subfamily.

The protein localises to the membrane. It catalyses the reaction L-tyrosyl-[protein] + ATP = O-phospho-L-tyrosyl-[protein] + ADP + H(+). This chain is Tyrosine kinase receptor Cad96Ca (Cad96Ca), found in Drosophila melanogaster (Fruit fly).